Here is a 534-residue protein sequence, read N- to C-terminus: Glucan endo-1,3-beta-glucosidase 12 (534 aa).

Positions 1–24 are cleaved as a signal peptide; the sequence is MGQRLNLVFWIFVSILAFLNFGMA. The Proton donor role is filled by E120. Residue N127 is glycosylated (N-linked (GlcNAc...) asparagine). E264 acts as the Nucleophile in catalysis. N-linked (GlcNAc...) asparagine glycosylation is found at N336, N357, and N375. Positions 348 to 379 are disordered; sequence ENTTPVSPTNSTTGTSPSPSSSPIINGNSTVT. Low complexity predominate over residues 349–377; sequence NTTPVSPTNSTTGTSPSPSSSPIINGNST. C392 and C455 are joined by a disulfide. 3 N-linked (GlcNAc...) asparagine glycosylation sites follow: N485, N491, and N495. Residue S507 is the site of GPI-anchor amidated serine attachment. Positions 508-534 are cleaved as a propeptide — removed in mature form; the sequence is STNEAFRQMVVAVSVLLPCFVVCSSIW.

Belongs to the glycosyl hydrolase 17 family. Contains two additional disulfide bonds.

The protein localises to the secreted. The protein resides in the cell wall. It is found in the cell membrane. It catalyses the reaction Hydrolysis of (1-&gt;3)-beta-D-glucosidic linkages in (1-&gt;3)-beta-D-glucans.. This chain is Glucan endo-1,3-beta-glucosidase 12, found in Arabidopsis thaliana (Mouse-ear cress).